The chain runs to 301 residues: Protoheme IX farnesyltransferase (301 aa).

The next 9 helical transmembrane spans lie at 9-29 (VLAY…VATI), 42-62 (IALI…ANSL), 89-109 (TSHA…WLWW), 113-133 (LLAG…YTMV), 142-162 (VVWG…AVTG), 168-188 (PIVL…ALAM), 211-231 (VTKQ…TLVP), 232-252 (AAGV…LLMA), and 280-300 (VVFV…GSLL).

This sequence belongs to the UbiA prenyltransferase family. Protoheme IX farnesyltransferase subfamily.

Its subcellular location is the cell membrane. The catalysed reaction is heme b + (2E,6E)-farnesyl diphosphate + H2O = Fe(II)-heme o + diphosphate. Its pathway is porphyrin-containing compound metabolism; heme O biosynthesis; heme O from protoheme: step 1/1. Functionally, converts heme B (protoheme IX) to heme O by substitution of the vinyl group on carbon 2 of heme B porphyrin ring with a hydroxyethyl farnesyl side group. The chain is Protoheme IX farnesyltransferase from Rhodococcus jostii (strain RHA1).